An 83-amino-acid chain; its full sequence is Large ribosomal subunit protein uL23 (83 aa).

The protein belongs to the universal ribosomal protein uL23 family. In terms of assembly, part of the 50S ribosomal subunit. Contacts protein L29.

In terms of biological role, binds to 23S rRNA. One of the proteins that surrounds the polypeptide exit tunnel on the outside of the ribosome. The polypeptide is Large ribosomal subunit protein uL23 (Thermoplasma volcanium (strain ATCC 51530 / DSM 4299 / JCM 9571 / NBRC 15438 / GSS1)).